The following is a 211-amino-acid chain: Imidazole glycerol phosphate synthase subunit HisH (211 aa).

In terms of domain architecture, Glutamine amidotransferase type-1 spans 5–211 (SVALLDYGSG…QLLRNWVDSL (207 aa)). Cys83 (nucleophile) is an active-site residue. Catalysis depends on residues His192 and Glu194.

Heterodimer of HisH and HisF.

The protein localises to the cytoplasm. The enzyme catalyses 5-[(5-phospho-1-deoxy-D-ribulos-1-ylimino)methylamino]-1-(5-phospho-beta-D-ribosyl)imidazole-4-carboxamide + L-glutamine = D-erythro-1-(imidazol-4-yl)glycerol 3-phosphate + 5-amino-1-(5-phospho-beta-D-ribosyl)imidazole-4-carboxamide + L-glutamate + H(+). It carries out the reaction L-glutamine + H2O = L-glutamate + NH4(+). Its pathway is amino-acid biosynthesis; L-histidine biosynthesis; L-histidine from 5-phospho-alpha-D-ribose 1-diphosphate: step 5/9. Functionally, IGPS catalyzes the conversion of PRFAR and glutamine to IGP, AICAR and glutamate. The HisH subunit catalyzes the hydrolysis of glutamine to glutamate and ammonia as part of the synthesis of IGP and AICAR. The resulting ammonia molecule is channeled to the active site of HisF. This Nocardia farcinica (strain IFM 10152) protein is Imidazole glycerol phosphate synthase subunit HisH.